Consider the following 371-residue polypeptide: uncharacterized protein (371 aa).

Transmembrane regions (helical) follow at residues 4 to 24 (LPMLWFFFCVTVLIIGYFIYG), 60 to 82 (LIQLLNIAGTGPIFGPILGALYG), 87 to 109 (LWIVIGCIFAGAVHDYFCGMLSI), 130 to 150 (VFINTLALVLLLLVGVVFVAS), 197 to 217 (VVAVWTAIIFAYYILATLLPV), 224 to 244 (IYPLFGALLLFMSVGMVYGLV), 282 to 302 (VPIWPLLFLTISCGALSGFHA), and 320 to 340 (FIFYGAMITEGVIALVWCMVG).

Belongs to the peptide transporter carbon starvation (CstA) (TC 2.A.114) family.

The protein resides in the cell membrane. This is an uncharacterized protein from Haemophilus influenzae (strain ATCC 51907 / DSM 11121 / KW20 / Rd).